A 216-amino-acid chain; its full sequence is Ras-related protein Rab-5C (216 aa).

Residues serine 30, alanine 31, glycine 33, lysine 34, serine 35, serine 36, histidine 47, glutamate 48, threonine 53, glycine 79, asparagine 134, lysine 135, aspartate 137, alanine 165, and lysine 166 each contribute to the GTP site. Serine 35 serves as a coordination point for Mg(2+). 2 short sequence motifs (switch) span residues 45-57 and 78-94; these read QFHEYQESTIGAA and AGQERYHSLAPMYYRGA. Threonine 53 is a binding site for Mg(2+). Residues 184–216 form a disordered region; it reads KNEPQNAPGGPGRNRVVDLQESSQPSRSQCCSN. The span at 203-216 shows a compositional bias: polar residues; that stretch reads QESSQPSRSQCCSN. Residues cysteine 213 and cysteine 214 are each lipidated (S-geranylgeranyl cysteine).

This sequence belongs to the small GTPase superfamily. Rab family. Mg(2+) is required as a cofactor. Detected in brain, ovary, rectum, small intestine, large intestine, liver, spleen, follicle and kidney (at protein level).

It localises to the cell membrane. The protein localises to the early endosome membrane. The catalysed reaction is GTP + H2O = GDP + phosphate + H(+). With respect to regulation, regulated by guanine nucleotide exchange factors (GEFs) which promote the exchange of bound GDP for free GTP. Regulated by GTPase activating proteins (GAPs) which increase the GTP hydrolysis activity. Inhibited by GDP dissociation inhibitors (GDIs). The small GTPases Rab are key regulators of intracellular membrane trafficking, from the formation of transport vesicles to their fusion with membranes. Rabs cycle between an inactive GDP-bound form and an active GTP-bound form that is able to recruit to membranes different sets of downstream effectors directly responsible for vesicle formation, movement, tethering and fusion. The polypeptide is Ras-related protein Rab-5C (RAB5C) (Gallus gallus (Chicken)).